Here is a 107-residue protein sequence, read N- to C-terminus: Late histone H2B.L4 (107 aa).

Residue Ser-94 is glycosylated (O-linked (GlcNAc) serine). Residue Lys-102 forms a Glycyl lysine isopeptide (Lys-Gly) (interchain with G-Cter in ubiquitin) linkage.

The protein belongs to the histone H2B family. As to quaternary structure, the nucleosome is a histone octamer containing two molecules each of H2A, H2B, H3 and H4 assembled in one H3-H4 heterotetramer and two H2A-H2B heterodimers. The octamer wraps approximately 147 bp of DNA. In terms of processing, monoubiquitination gives a specific tag for epigenetic transcriptional activation and is also prerequisite for histone H3 'Lys-4' and 'Lys-79' methylation. GlcNAcylation at Ser-94 promotes monoubiquitination of Lys-102. It fluctuates in response to extracellular glucose, and associates with transcribed genes.

It is found in the nucleus. The protein localises to the chromosome. In terms of biological role, core component of nucleosome. Nucleosomes wrap and compact DNA into chromatin, limiting DNA accessibility to the cellular machineries which require DNA as a template. Histones thereby play a central role in transcription regulation, DNA repair, DNA replication and chromosomal stability. DNA accessibility is regulated via a complex set of post-translational modifications of histones, also called histone code, and nucleosome remodeling. The chain is Late histone H2B.L4 from Strongylocentrotus purpuratus (Purple sea urchin).